We begin with the raw amino-acid sequence, 331 residues long: Ribosomal RNA small subunit methyltransferase H (331 aa).

S-adenosyl-L-methionine-binding positions include 39–41, Asp-56, Phe-83, Asp-100, and Gln-107; that span reads GGY.

It belongs to the methyltransferase superfamily. RsmH family.

It is found in the cytoplasm. It carries out the reaction cytidine(1402) in 16S rRNA + S-adenosyl-L-methionine = N(4)-methylcytidine(1402) in 16S rRNA + S-adenosyl-L-homocysteine + H(+). Its function is as follows. Specifically methylates the N4 position of cytidine in position 1402 (C1402) of 16S rRNA. This chain is Ribosomal RNA small subunit methyltransferase H, found in Bartonella bacilliformis (strain ATCC 35685 / KC583 / Herrer 020/F12,63).